The following is a 235-amino-acid chain: Uracil-DNA glycosylase (235 aa).

The active-site Proton acceptor is Asp71.

This sequence belongs to the uracil-DNA glycosylase (UDG) superfamily. UNG family.

The protein localises to the cytoplasm. The enzyme catalyses Hydrolyzes single-stranded DNA or mismatched double-stranded DNA and polynucleotides, releasing free uracil.. Its function is as follows. Excises uracil residues from the DNA which can arise as a result of misincorporation of dUMP residues by DNA polymerase or due to deamination of cytosine. In Campylobacter hominis (strain ATCC BAA-381 / DSM 21671 / CCUG 45161 / LMG 19568 / NCTC 13146 / CH001A), this protein is Uracil-DNA glycosylase.